Consider the following 362-residue polypeptide: Molybdopterin synthase catalytic subunit (362 aa).

Residues 101-102 (HR), Lys117, and 124-126 (KKE) each bind substrate.

Belongs to the MoaE family. MOCS2B subfamily. Heterotetramer; composed of 2 small (Mocs2A) and 2 large (Mocs2B) subunits.

The protein resides in the cytoplasm. It catalyses the reaction 2 [molybdopterin-synthase sulfur-carrier protein]-C-terminal-Gly-aminoethanethioate + cyclic pyranopterin phosphate + H2O = molybdopterin + 2 [molybdopterin-synthase sulfur-carrier protein]-C-terminal Gly-Gly + 2 H(+). It participates in cofactor biosynthesis; molybdopterin biosynthesis. Functionally, catalytic subunit of the molybdopterin synthase complex, a complex that catalyzes the conversion of precursor Z into molybdopterin. Acts by mediating the incorporation of 2 sulfur atoms from thiocarboxylated Mocs2A into precursor Z to generate a dithiolene group. This Drosophila grimshawi (Hawaiian fruit fly) protein is Molybdopterin synthase catalytic subunit.